The following is a 590-amino-acid chain: Negative elongation factor D (590 aa).

Positions 15 to 43 (FGSAAEWGDEADGGQQEDDYGEGEDDAEV) are disordered. Residues 21–43 (WGDEADGGQQEDDYGEGEDDAEV) are compositionally biased toward acidic residues.

The protein belongs to the NELF-D family. In terms of assembly, the NELF complex is composed of NELFA, NELFB, NELFCD and NELFE; NELFA and NELFCD form a stable subcomplex that binds primarily through NELFCD to the N-terminus of NELFB. Binds RNA which may help to stabilize the NELF complex on nucleic acid. In vitro, the NELFA:NELFCD subcomplex binds to ssDNA and ssRNA in a sequence- and structure-dependent manner. Interacts with ARAF1. Interacts with PCF11. Interacts with NELFB. Interacts with KAT8.

The protein resides in the nucleus. Essential component of the NELF complex, a complex that negatively regulates the elongation of transcription by RNA polymerase II. The NELF complex, which acts via an association with the DSIF complex and causes transcriptional pausing, is counteracted by the P-TEFb kinase complex. This chain is Negative elongation factor D (NELFCD), found in Sus scrofa (Pig).